We begin with the raw amino-acid sequence, 290 residues long: Acetyl-coenzyme A carboxylase carboxyl transferase subunit beta (290 aa).

In terms of domain architecture, CoA carboxyltransferase N-terminal spans 28–290; sequence IMTKCPKCKK…TGGDIEWLQD (263 aa). Zn(2+)-binding residues include C32, C35, C51, and C54. The segment at 32–54 adopts a C4-type zinc-finger fold; the sequence is CPKCKKIMLTKELDKNMRVCMNC.

This sequence belongs to the AccD/PCCB family. Acetyl-CoA carboxylase is a heterohexamer composed of biotin carboxyl carrier protein (AccB), biotin carboxylase (AccC) and two subunits each of ACCase subunit alpha (AccA) and ACCase subunit beta (AccD). Zn(2+) is required as a cofactor.

The protein resides in the cytoplasm. It catalyses the reaction N(6)-carboxybiotinyl-L-lysyl-[protein] + acetyl-CoA = N(6)-biotinyl-L-lysyl-[protein] + malonyl-CoA. It participates in lipid metabolism; malonyl-CoA biosynthesis; malonyl-CoA from acetyl-CoA: step 1/1. Its activity is regulated as follows. Inhibited by pyrrolidine dione antibiotics moiramide B (CPD1) and CPD2. Component of the acetyl coenzyme A carboxylase (ACC) complex. Biotin carboxylase (BC) catalyzes the carboxylation of biotin on its carrier protein (BCCP) and then the CO(2) group is transferred by the transcarboxylase to acetyl-CoA to form malonyl-CoA. In Bacillus subtilis (strain 168), this protein is Acetyl-coenzyme A carboxylase carboxyl transferase subunit beta.